The chain runs to 443 residues: Toxin YjjJ (443 aa).

D342 acts as the Proton acceptor in catalysis.

The protein belongs to the HipA Ser/Thr kinase family.

Its function is as follows. Toxic when overexpressed in E.coli, leading to long filamentous cells. The toxic effect is neutralized by non-cognate antitoxin HipB. Does not seem to inhibit DNA, RNA or protein synthesis, and unlike paralogous toxin HipA its toxic activity is not counteracted by overexpression of GltX. Binds DNA. Might be a protein kinase. The chain is Toxin YjjJ (yjjJ) from Escherichia coli (strain K12).